The chain runs to 24 residues: Acidic phospholipase A2 4 (24 aa).

The protein belongs to the phospholipase A2 family. Group II subfamily. Ca(2+) serves as cofactor. In terms of tissue distribution, expressed by the venom gland.

The protein localises to the secreted. The enzyme catalyses a 1,2-diacyl-sn-glycero-3-phosphocholine + H2O = a 1-acyl-sn-glycero-3-phosphocholine + a fatty acid + H(+). Its function is as follows. PLA2 catalyzes the calcium-dependent hydrolysis of the 2-acyl groups in 3-sn-phosphoglycerides. The chain is Acidic phospholipase A2 4 from Trimeresurus stejnegeri (Chinese green tree viper).